The primary structure comprises 215 residues: Glutathione S-transferase F10 (215 aa).

A GST N-terminal domain is found at 2–81; the sequence is VLTIYAPLFA…YIAEKYRSQG (80 aa). Residues 11-12, 39-40, 52-53, and 65-66 each bind glutathione; these read AS, QR, KI, and ES. The GST C-terminal domain maps to 88-215; sequence TIEERGQVEQ…EVSAKYSLPV (128 aa).

Belongs to the GST superfamily. Phi family. In terms of assembly, interacts with BAK1. In terms of tissue distribution, expressed in roots, stems, floral buds, mature flowers and leaves.

It is found in the cytoplasm. It localises to the cytosol. It carries out the reaction RX + glutathione = an S-substituted glutathione + a halide anion + H(+). In terms of biological role, in vitro, possesses glutathione S-transferase activity toward 1-chloro-2,4-dinitrobenzene (CDNB) and benzyl isothiocyanate (BITC). May be involved in the conjugation of reduced glutathione to a wide number of exogenous and endogenous hydrophobic electrophiles and have a detoxification role against certain herbicides. The chain is Glutathione S-transferase F10 from Arabidopsis thaliana (Mouse-ear cress).